A 211-amino-acid chain; its full sequence is HTH-type transcriptional repressor FabR (211 aa).

Positions 10–70 (RTRRSLIEAA…TMVDESGLML (61 aa)) constitute an HTH tetR-type domain. The segment at residues 33–52 (SLREVSREAGIAPTSFYRHF) is a DNA-binding region (H-T-H motif).

Homodimer.

The protein resides in the cytoplasm. Represses the transcription of fabB, involved in unsaturated fatty acid (UFA) biosynthesis. By controlling UFA production, FabR directly influences the physical properties of the membrane bilayer. The protein is HTH-type transcriptional repressor FabR of Yersinia pseudotuberculosis serotype O:1b (strain IP 31758).